Reading from the N-terminus, the 645-residue chain is Beta-galactosidase (645 aa).

R102 contacts substrate. C106 lines the Zn(2+) pocket. A substrate-binding site is contributed by N140. E141 acts as the Proton donor in catalysis. Residues C150, C152, and C155 each contribute to the Zn(2+) site. E312 acts as the Nucleophile in catalysis. Substrate is bound by residues W320 and 360 to 363 (EQMH).

Belongs to the glycosyl hydrolase 42 family. In terms of assembly, homotrimer.

The catalysed reaction is Hydrolysis of terminal non-reducing beta-D-galactose residues in beta-D-galactosides.. With respect to regulation, inhibited by Cu(2+) and Fe(2+), and moderately activated by divalent cations such as Co(2+), Mn(2+) and Zn(2+). Considerably activated by dithiothreitol, beta-mercaptoethanol and cysteine. The protein is Beta-galactosidase of Thermus thermophilus.